The following is a 404-amino-acid chain: 26S proteasome regulatory subunit 6A-B (404 aa).

192-199 (GPPGTGKT) contacts ATP.

Belongs to the AAA ATPase family. In terms of assembly, may form a heterodimer with a related family member.

It localises to the cytoplasm. Its subcellular location is the nucleus. Its function is as follows. The 26S proteasome is involved in the ATP-dependent degradation of ubiquitinated proteins. The regulatory (or ATPase) complex confers ATP dependency and substrate specificity to the 26S complex. The protein is 26S proteasome regulatory subunit 6A-B (psmc3-b) of Xenopus laevis (African clawed frog).